The primary structure comprises 669 residues: tRNA 5-methylaminomethyl-2-thiouridine biosynthesis bifunctional protein MnmC (669 aa).

Residues methionine 1–lysine 246 form a tRNA (mnm(5)s(2)U34)-methyltransferase region. The tract at residues isoleucine 271–isoleucine 669 is FAD-dependent cmnm(5)s(2)U34 oxidoreductase.

The protein in the N-terminal section; belongs to the methyltransferase superfamily. tRNA (mnm(5)s(2)U34)-methyltransferase family. This sequence in the C-terminal section; belongs to the DAO family. Requires FAD as cofactor.

It localises to the cytoplasm. It catalyses the reaction 5-aminomethyl-2-thiouridine(34) in tRNA + S-adenosyl-L-methionine = 5-methylaminomethyl-2-thiouridine(34) in tRNA + S-adenosyl-L-homocysteine + H(+). Its function is as follows. Catalyzes the last two steps in the biosynthesis of 5-methylaminomethyl-2-thiouridine (mnm(5)s(2)U) at the wobble position (U34) in tRNA. Catalyzes the FAD-dependent demodification of cmnm(5)s(2)U34 to nm(5)s(2)U34, followed by the transfer of a methyl group from S-adenosyl-L-methionine to nm(5)s(2)U34, to form mnm(5)s(2)U34. This Pseudoalteromonas translucida (strain TAC 125) protein is tRNA 5-methylaminomethyl-2-thiouridine biosynthesis bifunctional protein MnmC.